Here is a 73-residue protein sequence, read N- to C-terminus: Toxin Td5 (73 aa).

The first 7 residues, 1–7 (IGMVVEC), serve as a signal peptide directing secretion. One can recognise an LCN-type CS-alpha/beta domain in the interval 8–70 (KDGYLVGNDG…IWNSATNRCR (63 aa)). Cystine bridges form between Cys18–Cys69, Cys22–Cys44, Cys30–Cys50, and Cys34–Cys52. Arg70 is modified (arginine amide).

It belongs to the long (4 C-C) scorpion toxin superfamily. Sodium channel inhibitor family. Beta subfamily. Expressed by the venom gland.

It is found in the secreted. Its function is as follows. Beta toxins bind voltage-independently at site-4 of sodium channels (Nav) and shift the voltage of activation toward more negative potentials thereby affecting sodium channel activation and promoting spontaneous and repetitive firing. The polypeptide is Toxin Td5 (Tityus discrepans (Venezuelan scorpion)).